Here is a 347-residue protein sequence, read N- to C-terminus: Lipoyl synthase (347 aa).

Residues cysteine 55, cysteine 60, cysteine 66, cysteine 81, cysteine 85, cysteine 88, and serine 292 each coordinate [4Fe-4S] cluster. In terms of domain architecture, Radical SAM core spans 67 to 281 (WEDREATFLI…RDYGHDIGFA (215 aa)).

The protein belongs to the radical SAM superfamily. Lipoyl synthase family. It depends on [4Fe-4S] cluster as a cofactor.

The protein localises to the cytoplasm. The enzyme catalyses [[Fe-S] cluster scaffold protein carrying a second [4Fe-4S](2+) cluster] + N(6)-octanoyl-L-lysyl-[protein] + 2 oxidized [2Fe-2S]-[ferredoxin] + 2 S-adenosyl-L-methionine + 4 H(+) = [[Fe-S] cluster scaffold protein] + N(6)-[(R)-dihydrolipoyl]-L-lysyl-[protein] + 4 Fe(3+) + 2 hydrogen sulfide + 2 5'-deoxyadenosine + 2 L-methionine + 2 reduced [2Fe-2S]-[ferredoxin]. It participates in protein modification; protein lipoylation via endogenous pathway; protein N(6)-(lipoyl)lysine from octanoyl-[acyl-carrier-protein]: step 2/2. Its function is as follows. Catalyzes the radical-mediated insertion of two sulfur atoms into the C-6 and C-8 positions of the octanoyl moiety bound to the lipoyl domains of lipoate-dependent enzymes, thereby converting the octanoylated domains into lipoylated derivatives. In Corynebacterium kroppenstedtii (strain DSM 44385 / JCM 11950 / CIP 105744 / CCUG 35717), this protein is Lipoyl synthase.